The following is a 326-amino-acid chain: Virulence-associated V antigen (326 aa).

Its subcellular location is the secreted. Its function is as follows. Possibly involved in calcium regulation of YOP expression, which includes the export process. In Yersinia pestis, this protein is Virulence-associated V antigen (lcrV).